Consider the following 338-residue polypeptide: Nucleoid-associated protein VSAL_I1059 (338 aa).

The interval 319–338 is disordered; that stretch reads KGTPPNLKDQLTRRLGSSES.

Belongs to the YejK family.

It localises to the cytoplasm. It is found in the nucleoid. This is Nucleoid-associated protein VSAL_I1059 from Aliivibrio salmonicida (strain LFI1238) (Vibrio salmonicida (strain LFI1238)).